Here is a 129-residue protein sequence, read N- to C-terminus: Lysozyme C (129 aa).

One can recognise a C-type lysozyme domain in the interval 1 to 129 (KVFGRCELAA…VRVWIKGCRL (129 aa)). 4 cysteine pairs are disulfide-bonded: Cys6–Cys127, Cys30–Cys115, Cys64–Cys80, and Cys76–Cys94. Active-site residues include Glu35 and Asp52.

It belongs to the glycosyl hydrolase 22 family. Monomer.

The protein resides in the secreted. It catalyses the reaction Hydrolysis of (1-&gt;4)-beta-linkages between N-acetylmuramic acid and N-acetyl-D-glucosamine residues in a peptidoglycan and between N-acetyl-D-glucosamine residues in chitodextrins.. Lysozymes have primarily a bacteriolytic function; those in tissues and body fluids are associated with the monocyte-macrophage system and enhance the activity of immunoagents. This chain is Lysozyme C (LYZ), found in Numida meleagris (Helmeted guineafowl).